The sequence spans 377 residues: Nitric oxide reductase FlRd-NAD(+) reductase (377 aa).

Belongs to the FAD-dependent oxidoreductase family. Requires FAD as cofactor.

It localises to the cytoplasm. The catalysed reaction is 2 reduced [nitric oxide reductase rubredoxin domain] + NAD(+) + H(+) = 2 oxidized [nitric oxide reductase rubredoxin domain] + NADH. Its pathway is nitrogen metabolism; nitric oxide reduction. Its function is as follows. One of at least two accessory proteins for anaerobic nitric oxide (NO) reductase. Reduces the rubredoxin moiety of NO reductase. The chain is Nitric oxide reductase FlRd-NAD(+) reductase from Salmonella paratyphi A (strain AKU_12601).